We begin with the raw amino-acid sequence, 266 residues long: Thymidylate synthase (266 aa).

DUMP-binding positions include Arg21 and 127 to 128 (RR). Cys147 functions as the Nucleophile in the catalytic mechanism. DUMP-binding positions include 168–171 (RSAD), Asn179, and 209–211 (HIY). Asp171 is a (6R)-5,10-methylene-5,6,7,8-tetrahydrofolate binding site. Position 265 (Ala265) interacts with (6R)-5,10-methylene-5,6,7,8-tetrahydrofolate.

The protein belongs to the thymidylate synthase family. Bacterial-type ThyA subfamily. Homodimer.

It is found in the cytoplasm. It carries out the reaction dUMP + (6R)-5,10-methylene-5,6,7,8-tetrahydrofolate = 7,8-dihydrofolate + dTMP. It functions in the pathway pyrimidine metabolism; dTTP biosynthesis. Functionally, catalyzes the reductive methylation of 2'-deoxyuridine-5'-monophosphate (dUMP) to 2'-deoxythymidine-5'-monophosphate (dTMP) while utilizing 5,10-methylenetetrahydrofolate (mTHF) as the methyl donor and reductant in the reaction, yielding dihydrofolate (DHF) as a by-product. This enzymatic reaction provides an intracellular de novo source of dTMP, an essential precursor for DNA biosynthesis. The polypeptide is Thymidylate synthase (Brachyspira hyodysenteriae (strain ATCC 49526 / WA1)).